A 255-amino-acid polypeptide reads, in one-letter code: GTP cyclohydrolase III 1 (255 aa).

The protein belongs to the archaeal-type GTP cyclohydrolase family.

The enzyme catalyses GTP + 3 H2O = 2-amino-5-formylamino-6-(5-phospho-D-ribosylamino)pyrimidin-4(3H)-one + 2 phosphate + 2 H(+). In terms of biological role, catalyzes the formation of 2-amino-5-formylamino-6-ribofuranosylamino-4(3H)-pyrimidinone ribonucleotide monophosphate and inorganic phosphate from GTP. Also has an independent pyrophosphate phosphohydrolase activity. The chain is GTP cyclohydrolase III 1 (gch31) from Halobacterium salinarum (strain ATCC 700922 / JCM 11081 / NRC-1) (Halobacterium halobium).